We begin with the raw amino-acid sequence, 611 residues long: Dihydroxy-acid dehydratase (611 aa).

A Mg(2+)-binding site is contributed by D81. C122 serves as a coordination point for [2Fe-2S] cluster. Positions 123 and 124 each coordinate Mg(2+). N6-carboxylysine is present on K124. C195 is a binding site for [2Fe-2S] cluster. Mg(2+) is bound at residue E491. S517 serves as the catalytic Proton acceptor.

It belongs to the IlvD/Edd family. In terms of assembly, homodimer. Requires [2Fe-2S] cluster as cofactor. Mg(2+) serves as cofactor.

It carries out the reaction (2R)-2,3-dihydroxy-3-methylbutanoate = 3-methyl-2-oxobutanoate + H2O. The enzyme catalyses (2R,3R)-2,3-dihydroxy-3-methylpentanoate = (S)-3-methyl-2-oxopentanoate + H2O. The protein operates within amino-acid biosynthesis; L-isoleucine biosynthesis; L-isoleucine from 2-oxobutanoate: step 3/4. It participates in amino-acid biosynthesis; L-valine biosynthesis; L-valine from pyruvate: step 3/4. Functions in the biosynthesis of branched-chain amino acids. Catalyzes the dehydration of (2R,3R)-2,3-dihydroxy-3-methylpentanoate (2,3-dihydroxy-3-methylvalerate) into 2-oxo-3-methylpentanoate (2-oxo-3-methylvalerate) and of (2R)-2,3-dihydroxy-3-methylbutanoate (2,3-dihydroxyisovalerate) into 2-oxo-3-methylbutanoate (2-oxoisovalerate), the penultimate precursor to L-isoleucine and L-valine, respectively. The sequence is that of Dihydroxy-acid dehydratase from Brucella anthropi (strain ATCC 49188 / DSM 6882 / CCUG 24695 / JCM 21032 / LMG 3331 / NBRC 15819 / NCTC 12168 / Alc 37) (Ochrobactrum anthropi).